The following is a 143-amino-acid chain: MIRKSKKITKQRGSRTCGYGEAKKHRGAGHRGGRGNAGHQKHKWLSVCKFNPEYFGKYGFNRNPCLIKKLETINVGELEEYVLKYKDAFKLKDGKVVVNATEIGFEKILGKGRISTAMVVKAVEFSEGAKEKIEAAGGEFVEL.

Composition is skewed to basic residues over residues 1–13 and 23–38; these read MIRKSKKITKQRG and KKHRGAGHRGGRGNAG. The disordered stretch occupies residues 1-38; the sequence is MIRKSKKITKQRGSRTCGYGEAKKHRGAGHRGGRGNAG.

It belongs to the universal ribosomal protein uL15 family. In terms of assembly, part of the 50S ribosomal subunit.

Binds to the 23S rRNA. The chain is Large ribosomal subunit protein uL15 from Methanococcus vannielii.